A 190-amino-acid chain; its full sequence is MSSVLRPALSLIVLMSLITGVAYPLVVTGVAQVAFPAQANGSLLYDEAGKVRGSALIAQSFTGDEWFQSRPSAGAFATVASGASNFAPSNPALATRVTEDAAKLANAAQGPVPLALLTTSGSGLDPHLSPEAIAWQAGRVAAARQLPLDKLQALIDASTQRPLIGPPVVNVLTLNMSLNQLPSAPRNAQL.

A helical transmembrane segment spans residues 11–31 (LIVLMSLITGVAYPLVVTGVA).

Belongs to the KdpC family. In terms of assembly, the system is composed of three essential subunits: KdpA, KdpB and KdpC.

Its subcellular location is the cell inner membrane. Part of the high-affinity ATP-driven potassium transport (or Kdp) system, which catalyzes the hydrolysis of ATP coupled with the electrogenic transport of potassium into the cytoplasm. This subunit acts as a catalytic chaperone that increases the ATP-binding affinity of the ATP-hydrolyzing subunit KdpB by the formation of a transient KdpB/KdpC/ATP ternary complex. This Pseudomonas syringae pv. tomato (strain ATCC BAA-871 / DC3000) protein is Potassium-transporting ATPase KdpC subunit.